The chain runs to 440 residues: Streptokinase C (440 aa).

The signal sequence occupies residues 1–26; the sequence is MKNYLSFGMFALLFALTFGTVNSVQA.

Functionally, this protein is not a protease, but it activates plasminogen by complexing with it. As a potential virulence factor, it is thought to prevent the formation of effective fibrin barriers around the site of infection, thereby contributing to the invasiveness of the cells. This chain is Streptokinase C (skc), found in Streptococcus dysgalactiae subsp. equisimilis (Streptococcus equisimilis).